The chain runs to 1386 residues: YLP motif-containing protein 1 (1386 aa).

Disordered stretches follow at residues 1 to 336 (MYPN…EDAR) and 517 to 1068 (TSIP…PPGR). The span at 14-27 (YPPPPVPPPPPPVA) shows a compositional bias: pro residues. Composition is skewed to low complexity over residues 31 to 50 (ASPG…SSSG) and 59 to 80 (LAQL…LQPH). Composition is skewed to pro residues over residues 81 to 93 (HLPP…PPVM), 102 to 114 (QPPP…PPGP), 148 to 158 (PESPPVPPGSY), 166 to 176 (MPPPQPPPSYY), and 184 to 203 (YLPP…PPSI). Polar residues predominate over residues 237–259 (STMTPQEQQQYWYRQHLLSLQQR). The segment covering 260–270 (TKVHLPGHKKG) has biased composition (basic residues). Over residues 276–285 (DVPEPIKEEA) the composition is skewed to basic and acidic residues. Positions 302-317 (PPLPPPNEEAPPPLSP) are enriched in pro residues. Residues 320–333 (PQSEDSEDSEDSEE) are compositionally biased toward acidic residues. Composition is skewed to pro residues over residues 517 to 558 (TSIP…PPPA), 566 to 603 (PVLP…PQGM), and 641 to 650 (PPSPYHPPPQ). Over residues 651-667 (SEQVNSKPLNKVFSSEQ) the composition is skewed to polar residues. The residue at position 683 (K683) is an N6-methyllysine. Residues 706–722 (RGPREQKEQLQKLKDFG) are compositionally biased toward basic and acidic residues. A compositionally biased stretch (pro residues) spans 746-761 (MYPPPGSYRPPPPMGK). The segment covering 762-779 (PPGSIVRPSAPPARSSIP) has biased composition (low complexity). Pro residues-rich tracts occupy residues 781 to 803 (TRPP…PPPV) and 848 to 878 (PVLP…PPPV). Residue K894 forms a Glycyl lysine isopeptide (Lys-Gly) (interchain with G-Cter in SUMO2) linkage. Basic and acidic residues-rich tracts occupy residues 904–938 (ITLR…EPYF), 945–1014 (TDHR…DRPP), 1023–1033 (GERRTYPEERM), and 1049–1068 (RVEK…PPGR). K951 is covalently cross-linked (Glycyl lysine isopeptide (Lys-Gly) (interchain with G-Cter in SUMO2)). Residues 1336-1343 (KKRVRWAD) are involved in interaction with PPP1CA.

As to quaternary structure, interacts with PPP1CA and NCOA5. Forms a complex with ILF2, ILF3, KHDRBS1, RBMX, NCOA5 and PPP1CA.

The protein localises to the nucleus. Its subcellular location is the nucleus speckle. Plays a role in the reduction of telomerase activity during differentiation of embryonic stem cells by binding to the core promoter of TERT and controlling its down-regulation. The protein is YLP motif-containing protein 1 (Ylpm1) of Mus musculus (Mouse).